Consider the following 239-residue polypeptide: Ribosomal RNA small subunit methyltransferase G (239 aa).

S-adenosyl-L-methionine-binding positions include glycine 78, phenylalanine 83, 129-130 (AE), and arginine 148.

The protein belongs to the methyltransferase superfamily. RNA methyltransferase RsmG family.

The protein localises to the cytoplasm. Its function is as follows. Specifically methylates the N7 position of a guanine in 16S rRNA. The chain is Ribosomal RNA small subunit methyltransferase G from Clostridium botulinum (strain 657 / Type Ba4).